Consider the following 251-residue polypeptide: Putative imidazole glycerol phosphate synthase subunit hisF2 (251 aa).

Asp130 is an active-site residue.

This sequence belongs to the HisA/HisF family. Heterodimer of HisH and HisF.

It localises to the cytoplasm. The enzyme catalyses 5-[(5-phospho-1-deoxy-D-ribulos-1-ylimino)methylamino]-1-(5-phospho-beta-D-ribosyl)imidazole-4-carboxamide + L-glutamine = D-erythro-1-(imidazol-4-yl)glycerol 3-phosphate + 5-amino-1-(5-phospho-beta-D-ribosyl)imidazole-4-carboxamide + L-glutamate + H(+). The protein operates within amino-acid biosynthesis; L-histidine biosynthesis; L-histidine from 5-phospho-alpha-D-ribose 1-diphosphate: step 5/9. Functionally, IGPS catalyzes the conversion of PRFAR and glutamine to IGP, AICAR and glutamate. The HisF subunit catalyzes the cyclization activity that produces IGP and AICAR from PRFAR using the ammonia provided by the HisH subunit. The sequence is that of Putative imidazole glycerol phosphate synthase subunit hisF2 (hisF2) from Pseudomonas aeruginosa (strain ATCC 15692 / DSM 22644 / CIP 104116 / JCM 14847 / LMG 12228 / 1C / PRS 101 / PAO1).